The chain runs to 246 residues: UDP-N-acetyl-D-mannosaminuronic acid transferase (246 aa).

The protein belongs to the glycosyltransferase 26 family.

The enzyme catalyses UDP-N-acetyl-alpha-D-mannosaminouronate + N-acetyl-alpha-D-glucosaminyl-di-trans,octa-cis-undecaprenyl diphosphate = beta-D-ManNAcA-(1-&gt;4)-alpha-D-GlcNAc-di-trans,octa-cis-undecaprenyl diphosphate + UDP + H(+). It participates in bacterial outer membrane biogenesis; enterobacterial common antigen biosynthesis. Its function is as follows. Catalyzes the synthesis of Und-PP-GlcNAc-ManNAcA (Lipid II), the second lipid-linked intermediate involved in enterobacterial common antigen (ECA) synthesis. This is UDP-N-acetyl-D-mannosaminuronic acid transferase from Escherichia coli O157:H7.